The sequence spans 390 residues: MSVRVARVAWVRGLGASYRRGASSFPVPPPGAQGVAELLRDATGAEEEAPWAATERRMPGQCSVLLFPGQGSQVVGMGRGLLNYPRVRELYAAARRVLGYDLLELSLHGPQETLDRTVHCQPAIFVASLAAVEKLHHLQPSVIENCVAAAGFSVGEFAALVFAGAMEFAEGLYAVKIRAEAMQEASEAVPSGMLSVLGQPQSKFNFACLEAREHCKSLGIENPVCEVSNYLFPDCRVISGHQEALRFLQKNSSKFHFRRTRMLPVSGAFHTRLMEPAVEPLTQALKAVDIKKPLVSVYSNVHAHRYRHPGHIHKLLAQQLVSPVKWEQTMHAIYERKKGRGFPQTFEVGPGRQLGAILKSCNMQAWKSYSAVDVLQTLEHVDLDPQEPPR.

The transit peptide at 1–21 (MSVRVARVAWVRGLGASYRRG) directs the protein to the mitochondrion. Residues Ser-153 and His-270 contribute to the active site. Lys-314 is subject to N6-succinyllysine.

The protein belongs to the type II malonyltransferase family.

It localises to the mitochondrion. The enzyme catalyses holo-[ACP] + malonyl-CoA = malonyl-[ACP] + CoA. Its pathway is lipid metabolism; fatty acid biosynthesis. In terms of biological role, catalyzes the transfer of a malonyl moiety from malonyl-CoA to the free thiol group of the phosphopantetheine arm of the mitochondrial ACP protein (NDUFAB1). This suggests the existence of the biosynthesis of fatty acids in mitochondria. Also acts as a mitochondrial small ribosomal subunit (mt-SSU) assembly factor. In Homo sapiens (Human), this protein is Malonyl-CoA-acyl carrier protein transacylase, mitochondrial.